We begin with the raw amino-acid sequence, 108 residues long: DNA-directed RNA polymerase III subunit RPC10 (108 aa).

6 residues coordinate Zn(2+): C5, C8, C25, C28, C69, and C72. Residues 5 to 28 (CPGCGNGLIVEEGQRCHRFACNTC) form a C4-type zinc finger. Residues 65–107 (TAEPCPKCEHPRAYFMQLQTRSADEPMTTFYKCCNAQCGHRWR) form a TFIIS-type zinc finger. Positions 88-89 (DE) match the Hairpin motif. The Zn(2+) site is built by C98 and C102.

Belongs to the archaeal RpoM/eukaryotic RPA12/RPB9/RPC11 RNA polymerase family. As to quaternary structure, component of the RNA polymerase III complex consisting of 17 subunits: a ten-subunit horseshoe-shaped catalytic core composed of POLR3A/RPC1, POLR3B/RPC2, POLR1C/RPAC1, POLR1D/RPAC2, POLR3K/RPC10, POLR2E/RPABC1, POLR2F/RPABC2, POLR2H/RPABC3, POLR2K/RPABC4 and POLR2L/RPABC5; a mobile stalk composed of two subunits POLR3H/RPC8 and CRCP/RPC9, protruding from the core and functioning primarily in transcription initiation; and additional subunits homologous to general transcription factors of the RNA polymerase II machinery, POLR3C/RPC3-POLR3F/RPC6-POLR3G/RPC7 heterotrimer required for transcription initiation and POLR3D/RPC4-POLR3E/RPC5 heterodimer involved in both transcription initiation and termination.

It is found in the nucleus. In terms of biological role, core component of RNA polymerase III (Pol III) which synthesizes small non-coding RNAs using the four ribonucleoside triphosphates as substrates. Can mediate Pol I proofreading of the nascent RNA transcript. Anchors into the Pol III active site to constantly monitor transcription fidelity, cleaves mis-incorporated 5'-ribonucleotides and restarts the transcription process. Once Pol III reaches the poly(dT) termination signal, can induce Pol III clamp opening and transcription termination. Pol III plays an important role in sensing and limiting infection by intracellular bacteria and DNA viruses. Acts as a nuclear and cytosolic DNA sensor involved in innate immune response. Can sense non-self dsDNA that serves as template for transcription into dsRNA. The non-self RNA polymerase III transcripts, such as Epstein-Barr virus-encoded RNAs (EBERs) induce type I interferon and NF-kappa-B through the RIG-I pathway. This chain is DNA-directed RNA polymerase III subunit RPC10, found in Mus musculus (Mouse).